We begin with the raw amino-acid sequence, 393 residues long: MALNINGVSLKSHKMLPFPCSSARSERVFMASTIHRPSVEVGSVKKAFTPPREVHVQVTHSMPPEKIEVFDSLRDWAAQNLLVHLKPVEKCWQPTDFLPDPASEGFDEQVKELRERCKEIPDDYFVVLIGDMITEEALPTYQTMINTLDGVRDETGATVTPWAIWTRAWTAEENRHGDLLNKYLYLSGRVDMKQIEKTIQYLIGSGMDPRTENNPYLGFVYTSLRKGVTFVSHGNTARLAKEHGDMKLAQICGSIAADEKRHETAYTKIVEKLLEVDPDGAVLAIGDMMRKNISMPAHLMYDGRDDNLFEHFSAVAQRLGVYTAKDYADILEFHVGRWEVEKLTGLSSEGRRAQDYVCGLAPRIRKLEERAQARAKHAKSVPFSWIFGKEIKL.

The N-terminal 30 residues, 1–30 (MALNINGVSLKSHKMLPFPCSSARSERVFM), are a transit peptide targeting the chloroplast. Glu135, Glu173, His176, Glu259, and His262 together coordinate Fe cation.

Belongs to the fatty acid desaturase type 2 family. As to quaternary structure, homodimer. Fe(2+) serves as cofactor.

It localises to the plastid. The protein localises to the chloroplast. The catalysed reaction is octadecanoyl-[ACP] + 2 reduced [2Fe-2S]-[ferredoxin] + O2 + 2 H(+) = (9Z)-octadecenoyl-[ACP] + 2 oxidized [2Fe-2S]-[ferredoxin] + 2 H2O. It participates in lipid metabolism; fatty acid metabolism. Converts stearoyl-ACP to oleoyl-ACP by introduction of a cis double bond between carbons 9 and 10 of the acyl chain. The protein is Stearoyl-[acyl-carrier-protein] 9-desaturase, chloroplastic of Solanum tuberosum (Potato).